We begin with the raw amino-acid sequence, 411 residues long: Putative polysaccharide ligase RC0486 (411 aa).

The next 10 helical transmembrane spans lie at 15–35 (LGML…LISF), 78–98 (GITM…IHLI), 101–121 (LATF…SNSA), 133–153 (LIFG…SNGF), 166–186 (MLDR…IILL), 207–227 (ISDS…FILT), 233–253 (IFFK…PVIA), 328–348 (ILQI…CLVY), 361–381 (NFKA…MISY), and 383–403 (IWQI…KLLV).

The protein belongs to the O-antigen ligase family.

It is found in the membrane. This is Putative polysaccharide ligase RC0486 from Rickettsia conorii (strain ATCC VR-613 / Malish 7).